Reading from the N-terminus, the 109-residue chain is MSQVELQHILWLLLAIGLEIIANIWLKFSDGFRRPVYGVASLAAVLAAFSALGQAVEGIDLAVAYALWGGFGIAATVAAGWIMFGQRLNRKGWAGLGLLLVGMVIIKLA.

The next 4 helical transmembrane spans lie at L6–L26, V36–V56, A64–F84, and L88–L108.

It belongs to the drug/metabolite transporter (DMT) superfamily. Small multidrug resistance (SMR) (TC 2.A.7.1) family. MdtI subfamily. As to quaternary structure, forms a complex with MdtJ.

The protein resides in the cell inner membrane. In terms of biological role, catalyzes the excretion of spermidine. The chain is Spermidine export protein MdtI (mdtI) from Cronobacter sakazakii (strain ATCC BAA-894) (Enterobacter sakazakii).